The following is a 160-amino-acid chain: Calsequestrin-2 (160 aa).

Belongs to the calsequestrin family. Monomer, homodimer and homooligomer. Mostly monomeric in the absence of calcium. Forms higher oligomers in a calcium-dependent manner. Dimers associate to form tetramers, that then form linear homomer chains. Interacts with ASPH and TRDN. In terms of processing, phosphorylation in the C-terminus, probably by CK2, moderately increases calcium buffering capacity. N-glycosylated.

It localises to the sarcoplasmic reticulum lumen. Calsequestrin is a high-capacity, moderate affinity, calcium-binding protein and thus acts as an internal calcium store in muscle. Calcium ions are bound by clusters of acidic residues at the protein surface, especially at the interface between subunits. Can bind around 60 Ca(2+) ions. Regulates the release of lumenal Ca(2+) via the calcium release channel RYR2; this plays an important role in triggering muscle contraction. Plays a role in excitation-contraction coupling in the heart and in regulating the rate of heart beats. This chain is Calsequestrin-2 (CASQ2), found in Sus scrofa (Pig).